A 209-amino-acid chain; its full sequence is Guanylate kinase (209 aa).

Residues 16–198 enclose the Guanylate kinase-like domain; that stretch reads GRLVIISGPS…AVTEICQILL (183 aa). Residue 23–30 coordinates ATP; sequence GPSGAGKS.

Belongs to the guanylate kinase family.

The protein localises to the cytoplasm. It carries out the reaction GMP + ATP = GDP + ADP. Essential for recycling GMP and indirectly, cGMP. The protein is Guanylate kinase of Rhodopirellula baltica (strain DSM 10527 / NCIMB 13988 / SH1).